The sequence spans 335 residues: Cytoskeleton protein RodZ (335 aa).

The Cytoplasmic portion of the chain corresponds to 1–111 (MNTEATHDQN…LGKRRKKRDG (111 aa)). Residues 19 to 71 (LRNAREQLGLSQQAVAERLCLKVSTVRDIEEDKAPADLASTFLRGYIRSYARL) enclose the HTH cro/C1-type domain. A DNA-binding region (H-T-H motif) is located at residues 30 to 49 (QQAVAERLCLKVSTVRDIEE). Residues 112–132 (WLMTFTWLVLFVVIGLSGAWW) form a helical; Signal-anchor for type II membrane protein membrane-spanning segment. The Periplasmic portion of the chain corresponds to 133-335 (WQDHKAQQEE…TLNAEQSPAQ (203 aa)). Polar residues predominate over residues 148–164 (DQSSAELNNNQSQSVPL). Residues 148–244 (DQSSAELNNN…PLPTDQAGVT (97 aa)) form a disordered region. Low complexity-rich tracts occupy residues 165–205 (DTST…DPQQ) and 217–239 (DTAATPAPAATTTPDGAAPLPTD).

This sequence belongs to the RodZ family.

It localises to the cell inner membrane. Cytoskeletal protein that is involved in cell-shape control through regulation of the length of the long axis. This chain is Cytoskeleton protein RodZ, found in Escherichia coli O127:H6 (strain E2348/69 / EPEC).